A 508-amino-acid chain; its full sequence is NAD(P)H-quinone oxidoreductase subunit 2 B, chloroplastic (508 aa).

Helical transmembrane passes span 24-44 (LLLF…GLIL), 59-79 (WLYF…LFRW), 99-119 (IFQF…VEYI), 124-144 (MAIT…MFLC), 149-169 (FITI…LSGY), 184-204 (LLMG…LYGL), 227-247 (PGIS…LSPA), 295-315 (WHLL…LIAI), 323-343 (MLAY…IVGD), 354-374 (YMLF…LFGL), 395-415 (ALSL…AGFF), 418-438 (LYLF…IGLL), and 482-502 (MIVC…IIAI).

This sequence belongs to the complex I subunit 2 family. As to quaternary structure, NDH is composed of at least 16 different subunits, 5 of which are encoded in the nucleus.

The protein resides in the plastid. It localises to the chloroplast thylakoid membrane. It carries out the reaction a plastoquinone + NADH + (n+1) H(+)(in) = a plastoquinol + NAD(+) + n H(+)(out). The catalysed reaction is a plastoquinone + NADPH + (n+1) H(+)(in) = a plastoquinol + NADP(+) + n H(+)(out). In terms of biological role, NDH shuttles electrons from NAD(P)H:plastoquinone, via FMN and iron-sulfur (Fe-S) centers, to quinones in the photosynthetic chain and possibly in a chloroplast respiratory chain. The immediate electron acceptor for the enzyme in this species is believed to be plastoquinone. Couples the redox reaction to proton translocation, and thus conserves the redox energy in a proton gradient. In Ipomoea purpurea (Common morning glory), this protein is NAD(P)H-quinone oxidoreductase subunit 2 B, chloroplastic.